A 436-amino-acid chain; its full sequence is MQVLQGAEARAALTRTFSQIPVPDAVLSRIEQTFGERLTPEQVVERILLDVRARGDDALRDWTERLDGPRPAELEVPAAELEAAQVAPELHAAIRLAAERVRAFYRQQPAHGFLEHGPDGALGQLVRPLGRVGVYVPGGLAPLISTLMHTAVPAQVAGVPDIVVTTPPGKDGQVHPAILVAARELGLSRVFKVGGAQAIAALAYGTASVPAVDKIAGPGNLFVVIAKRLVYGQTGIESLPGPTETLVVADDSASPRYVAADLLAQAEHNGAEPVLVSVSRELLLAVQAELNEQLENLPEPNRSWARDSVGARMKVVLADSLDEALDLANLYAPEHLCLLTRDPWSLLGQVRRAGGVFVGEASMEALGDYVAGPSHVMPTGGTARFMSPVNVRDFQNIISVVGVNEETLRRIGPAAATLARAEGLEAHARAVESRLK.

NAD(+) contacts are provided by Tyr135, Gln197, and Asn220. Residues Thr243, Gln265, and His268 each coordinate substrate. Gln265 and His268 together coordinate Zn(2+). Residues Glu334 and His335 each act as proton acceptor in the active site. His335, Asp368, Glu422, and His427 together coordinate substrate. Asp368 lines the Zn(2+) pocket. Residue His427 participates in Zn(2+) binding.

This sequence belongs to the histidinol dehydrogenase family. It depends on Zn(2+) as a cofactor.

The catalysed reaction is L-histidinol + 2 NAD(+) + H2O = L-histidine + 2 NADH + 3 H(+). Its pathway is amino-acid biosynthesis; L-histidine biosynthesis; L-histidine from 5-phospho-alpha-D-ribose 1-diphosphate: step 9/9. Functionally, catalyzes the sequential NAD-dependent oxidations of L-histidinol to L-histidinaldehyde and then to L-histidine. The sequence is that of Histidinol dehydrogenase from Deinococcus radiodurans (strain ATCC 13939 / DSM 20539 / JCM 16871 / CCUG 27074 / LMG 4051 / NBRC 15346 / NCIMB 9279 / VKM B-1422 / R1).